The sequence spans 345 residues: UDP-3-O-acylglucosamine N-acyltransferase (345 aa).

The active-site Proton acceptor is histidine 253.

It belongs to the transferase hexapeptide repeat family. LpxD subfamily. In terms of assembly, homotrimer.

It catalyses the reaction a UDP-3-O-[(3R)-3-hydroxyacyl]-alpha-D-glucosamine + a (3R)-hydroxyacyl-[ACP] = a UDP-2-N,3-O-bis[(3R)-3-hydroxyacyl]-alpha-D-glucosamine + holo-[ACP] + H(+). It participates in bacterial outer membrane biogenesis; LPS lipid A biosynthesis. Functionally, catalyzes the N-acylation of UDP-3-O-acylglucosamine using 3-hydroxyacyl-ACP as the acyl donor. Is involved in the biosynthesis of lipid A, a phosphorylated glycolipid that anchors the lipopolysaccharide to the outer membrane of the cell. The protein is UDP-3-O-acylglucosamine N-acyltransferase of Rickettsia massiliae (strain Mtu5).